We begin with the raw amino-acid sequence, 2599 residues long: Non-reducing polyketide synthase azaA (2599 aa).

The tract at residues 95–231 (PNILLSPMVV…AARSISSLQQ (137 aa)) is N-terminal acylcarrier protein transacylase domain (SAT). Residue Cys-132 is the Nucleophile; for transacylase activity of the active site. Catalysis depends on His-250, which acts as the Proton donor/acceptor; for transacylase activity. In terms of domain architecture, Ketosynthase family 3 (KS3) spans 372–790 (PNEIAVIGMS…GSNASMVVAQ (419 aa)). Catalysis depends on for beta-ketoacyl synthase activity residues Cys-539, His-674, and His-713. The segment at 902–1193 (FGGQISNYVG…ITSMASRALG (292 aa)) is malonyl-CoA:ACP transacylase (MAT) domain. Residues 1282–1413 (PKTLWSLIEA…GKLAFLSGQD (132 aa)) are N-terminal hotdog fold. The PKS/mFAS DH domain maps to 1282-1591 (PKTLWSLIEA…YHKVAKASMS (310 aa)). Residues 1310 to 1589 (LVSGHVIANT…INYHKVAKAS (280 aa)) are product template (PT) domain. His-1314 functions as the Proton acceptor; for dehydratase activity in the catalytic mechanism. Residues 1443–1591 (ADDIIQGRNI…YHKVAKASMS (149 aa)) form a C-terminal hotdog fold region. Residue Asp-1499 is the Proton donor; for dehydratase activity of the active site. The tract at residues 1601–1652 (EAAPSSSTRAHPTSSSSPRLPGPFVPEDKSQNETQTAGTNAVAKKKSEKSAQ) is disordered. Positions 1602-1619 (AAPSSSTRAHPTSSSSPR) are enriched in low complexity. One can recognise a Carrier domain in the interval 1653–1727 (QNVLDKTRAL…GLVEYVQSAV (75 aa)). Ser-1687 bears the O-(pantetheine 4'-phosphoryl)serine mark. Residues 1749–1779 (NLAASPSSSSSSTNLTEDSSLDPTETTTNIS) form a disordered region. Over residues 1750–1766 (LAASPSSSSSSTNLTED) the composition is skewed to low complexity. The segment covering 1769 to 1779 (LDPTETTTNIS) has biased composition (polar residues). Residues 1952–2140 (DSLLNKLSYR…VGYGQVDWTD (189 aa)) form a methyltransferase domain region. An NADPH-binding (R) domain region spans residues 2222–2467 (ITGATGSLGV…LCWTPVNDVA (246 aa)).

The cofactor is pantetheine 4'-phosphate.

The protein operates within secondary metabolite biosynthesis. Non-reducing polyketide synthase; part of the gene cluster that mediates the biosynthesis of azaphilones, a class of fungal metabolites characterized by a highly oxygenated pyrano-quinone bicyclic core and exhibiting a broad range of bioactivities. In the first step, the non-reducing polyketide synthase azaA forms the hexaketide precursor from successive condensations of five malonyl-CoA units, presumably with a simple acetyl-CoA starter unit. The reactive polyketide chain then undergoes a PT-mediated C2-C7 cyclization to afford the aromatic ring and is eventually released as an aldehyde through the R-domain. The putative ketoreductase azaE is proposed to catalyze the reduction of the terminal ketone resulting in the early culture product FK17-P2a. The monooxygenase azaH was demonstrated to be the only enzyme required to convert FK17-P2a to azanigerone E. AzaH first hydroxylates the benzaldehyde intermediate FK17-P2a at C4, which triggers the formation of the pyran-ring to afford azanigerone E. In parallel, the 2,4-dimethylhexanoyl chain is synthesized by the HR-PKS azaB and is proposed to be transferred to the C4-hydroxyl of azanigerone E by the acyltransferase azaD directly from the ACP domain of azaB. Alternatively, the 2,4-dimethyl-hexanoyl chain may be offloaded from the HR-PKS as a carboxylic acid and converted to an acyl-CoA by azaF. The resulting acyl-CoA molecule could then be taken up as a substrate by AzaD to form azanigerone B. To yield the carboxylic acid substituent in azanigerone A, the hydroxypropyl side chain of azanigerone B would need to undergo a C-C oxidative cleavage catalyzed by cytochrome P450 AzaI. AzaI is proposed to act on a vicinal diol that leads to a C-C bond scission either through an alkoxyradical intermediate or a peroxy complex. In the biosynthesis of azanigerone A, azanigerone B first undergoes hydroxylation at C10, possibly catalyzed by one of the two FAD-dependent monooxygenases encoded in the cluster, azaG or azaL, resulting in the vicinal diol azanigerone C. Oxidative cleavage of azanigerone C by azaI would yield the corresponding aldehyde derivative of azanigerone A. Finally, the dehydrogenase azaJ is proposed to convert the aldehyde functional group into the carboxylic acid, completing the conversion from azanigerone B to azanigerone A. Alternatively, the oxidation of aldehyde to carboxylic acid may be catalyzed by the same P450 enzyme azaI via consecutive oxidation or by endogenous alcohol dehydrogenase. In Aspergillus niger (strain ATCC 1015 / CBS 113.46 / FGSC A1144 / LSHB Ac4 / NCTC 3858a / NRRL 328 / USDA 3528.7), this protein is Non-reducing polyketide synthase azaA.